The primary structure comprises 351 residues: Sulfate/thiosulfate import ATP-binding protein CysA (351 aa).

An ABC transporter domain is found at 3–237 (ITVRNLHKRF…PRSAFVYEFL (235 aa)). Residue 35 to 42 (GPSGCGKT) participates in ATP binding.

Belongs to the ABC transporter superfamily. Sulfate/tungstate importer (TC 3.A.1.6) family. In terms of assembly, the complex is composed of two ATP-binding proteins (CysA), two transmembrane proteins (CysT and CysW) and a solute-binding protein (CysP).

Its subcellular location is the cell inner membrane. It carries out the reaction sulfate(out) + ATP + H2O = sulfate(in) + ADP + phosphate + H(+). The catalysed reaction is thiosulfate(out) + ATP + H2O = thiosulfate(in) + ADP + phosphate + H(+). In terms of biological role, part of the ABC transporter complex CysAWTP involved in sulfate/thiosulfate import. Responsible for energy coupling to the transport system. This is Sulfate/thiosulfate import ATP-binding protein CysA from Burkholderia mallei (strain ATCC 23344).